The chain runs to 29 residues: Protein Tat (29 aa).

Residues 1-29 (PSSQPRGDPTGQEEPKKKVEKKTTTDPFD) form a disordered region. The Cell attachment site motif lies at 6-8 (RGD). Residues 13 to 29 (EEPKKKVEKKTTTDPFD) are compositionally biased toward basic and acidic residues.

It belongs to the lentiviruses Tat family. In terms of assembly, interacts with host CCNT1. Associates with the P-TEFb complex composed at least of Tat, P-TEFb (CDK9 and CCNT1), TAR RNA, RNA Pol II. Recruits the HATs CREBBP, TAF1/TFIID, EP300, PCAF and GCN5L2. Interacts with host KAT5/Tip60; this interaction targets the latter to degradation. Interacts with the host deacetylase SIRT1. Interacts with host capping enzyme RNGTT; this interaction stimulates RNGTT. Binds to host KDR, and to the host integrins ITGAV/ITGB3 and ITGA5/ITGB1. Interacts with host KPNB1/importin beta-1 without previous binding to KPNA1/importin alpha-1. Interacts with EIF2AK2. Interacts with host nucleosome assembly protein NAP1L1; this interaction may be required for the transport of Tat within the nucleus, since the two proteins interact at the nuclear rim. Interacts with host C1QBP/SF2P32; this interaction involves lysine-acetylated Tat. Interacts with the host chemokine receptors CCR2, CCR3 and CXCR4. Interacts with host DPP4/CD26; this interaction may trigger an anti-proliferative effect. Interacts with host LDLR. Interacts with the host extracellular matrix metalloproteinase MMP1. Interacts with host PRMT6; this interaction mediates Tat's methylation. Interacts with, and is ubiquitinated by MDM2/Hdm2. Interacts with host PSMC3 and HTATIP2. Interacts with STAB1; this interaction may overcome SATB1-mediated repression of IL2 and IL2RA (interleukin) in T cells by binding to the same domain than HDAC1. Interacts (when acetylated) with human CDK13, thereby increasing HIV-1 mRNA splicing and promoting the production of the doubly spliced HIV-1 protein Nef. Post-translationally, acetylation by EP300, CREBBP, GCN5L2/GCN5 and PCAF regulates the transactivation activity of Tat. In terms of processing, phosphorylated by EIF2AK2 on serine and threonine residues adjacent to the basic region important for TAR RNA binding and function. Phosphorylation of Tat by EIF2AK2 is dependent on the prior activation of EIF2AK2 by dsRNA. Asymmetrical arginine methylation by host PRMT6 seems to diminish the transactivation capacity of Tat and affects the interaction with host CCNT1. Post-translationally, polyubiquitination by MDM2 does not target Tat to degradation, but activates its transactivation function and fosters interaction with CCNT1 and TAR RNA.

It localises to the host nucleus. The protein resides in the host nucleolus. The protein localises to the host cytoplasm. It is found in the secreted. In terms of biological role, transcriptional activator that increases RNA Pol II processivity, thereby increasing the level of full-length viral transcripts. Recognizes a hairpin structure at the 5'-LTR of the nascent viral mRNAs referred to as the transactivation responsive RNA element (TAR) and recruits the cyclin T1-CDK9 complex (P-TEFb complex) that will in turn hyperphosphorylate the RNA polymerase II to allow efficient elongation. The CDK9 component of P-TEFb and other Tat-activated kinases hyperphosphorylate the C-terminus of RNA Pol II that becomes stabilized and much more processive. Other factors such as HTATSF1/Tat-SF1, SUPT5H/SPT5, and HTATIP2 are also important for Tat's function. Besides its effect on RNA Pol II processivity, Tat induces chromatin remodeling of proviral genes by recruiting the histone acetyltransferases (HATs) CREBBP, EP300 and PCAF to the chromatin. This also contributes to the increase in proviral transcription rate, especially when the provirus integrates in transcriptionally silent region of the host genome. To ensure maximal activation of the LTR, Tat mediates nuclear translocation of NF-kappa-B by interacting with host RELA. Through its interaction with host TBP, Tat may also modulate transcription initiation. Tat can reactivate a latently infected cell by penetrating in it and transactivating its LTR promoter. In the cytoplasm, Tat is thought to act as a translational activator of HIV-1 mRNAs. Its function is as follows. Extracellular circulating Tat can be endocytosed by surrounding uninfected cells via the binding to several surface receptors such as CD26, CXCR4, heparan sulfate proteoglycans (HSPG) or LDLR. Neurons are rarely infected, but they internalize Tat via their LDLR. Endosomal low pH allows Tat to cross the endosome membrane to enter the cytosol and eventually further translocate into the nucleus, thereby inducing severe cell dysfunctions ranging from cell activation to cell death. Through its interaction with nuclear HATs, Tat is potentially able to control the acetylation-dependent cellular gene expression. Tat seems to inhibit the HAT activity of KAT5/Tip60 and TAF1, and consequently modify the expression of specific cellular genes. Modulates the expression of many cellular genes involved in cell survival, proliferation or in coding for cytokines (such as IL10) or cytokine receptors. May be involved in the derepression of host interleukin IL2 expression. Mediates the activation of cyclin-dependent kinases and dysregulation of microtubule network. Tat plays a role in T-cell and neurons apoptosis. Tat induced neurotoxicity and apoptosis probably contribute to neuroAIDS. Host extracellular matrix metalloproteinase MMP1 cleaves Tat and decreases Tat's mediated neurotoxicity. Circulating Tat also acts as a chemokine-like and/or growth factor-like molecule that binds to specific receptors on the surface of the cells, affecting many cellular pathways. In the vascular system, Tat binds to ITGAV/ITGB3 and ITGA5/ITGB1 integrins dimers at the surface of endothelial cells and competes with bFGF for heparin-binding sites, leading to an excess of soluble bFGF. Binds to KDR/VEGFR-2. All these Tat-mediated effects enhance angiogenesis in Kaposi's sarcoma lesions. The polypeptide is Protein Tat (Homo sapiens (Human)).